Reading from the N-terminus, the 261-residue chain is tRNA pseudouridine synthase A (261 aa).

Aspartate 51 serves as the catalytic Nucleophile. Position 109 (tyrosine 109) interacts with substrate.

This sequence belongs to the tRNA pseudouridine synthase TruA family. In terms of assembly, homodimer.

It carries out the reaction uridine(38/39/40) in tRNA = pseudouridine(38/39/40) in tRNA. Formation of pseudouridine at positions 38, 39 and 40 in the anticodon stem and loop of transfer RNAs. This chain is tRNA pseudouridine synthase A, found in Shewanella denitrificans (strain OS217 / ATCC BAA-1090 / DSM 15013).